Here is a 2038-residue protein sequence, read N- to C-terminus: Fer-1-like protein 5 (2038 aa).

7 C2 domains span residues 1–100, 145–265, 307–424, 1055–1186, 1225–1345, 1467–1587, and 1705–1853; these read MLRV…MFVR, TQKK…TLLR, QNTR…QGMY, TPED…FTPL, IPCK…SLNY, PKPP…ARCG, and GPPG…KQCS. The Ca(2+) site is built by aspartate 1502, aspartate 1508, aspartate 1557, phenylalanine 1558, aspartate 1559, aspartate 1565, aspartate 1824, serine 1827, and aspartate 1830. The helical transmembrane segment at 1961 to 1981 threads the bilayer; sequence IICLVVTLVIGFILLNFVYSA.

This sequence belongs to the ferlin family. As to quaternary structure, interacts (via second C2 domain) with EHD1 and EHD2. Ca(2+) serves as cofactor. As to expression, expressed in differentiating myoblasts and myotubes.

The protein resides in the cell membrane. It is found in the membrane. Plays a role in myoblast fusion; probable mediator of endocytic recycling for membrane trafficking events during myotube formation. The polypeptide is Fer-1-like protein 5 (Fer1l5) (Mus musculus (Mouse)).